A 415-amino-acid chain; its full sequence is Histone acetyltransferase type B subunit 2 (415 aa).

WD repeat units lie at residues 118 to 158, 163 to 203, 211 to 251, 256 to 296, and 307 to 347; these read ENNF…KTAI, PHED…ATDL, THKD…EPVS, PESE…TKSA, and GHSD…EEQA. Residues 349–353 are interaction with the histone H4 N-terminus; sequence EDAED. A WD 6 repeat occupies 364 to 404; sequence GHTGAVTDLSWCPYKDWTIGSVADDNIVHLWEIGKTLLNAE.

Belongs to the WD repeat RBAP46/RBAP48/MSI1 family. Component of the HAT-B complex composed of at least HAT1 and HAT2. The HAT-B complex binds to histone H4 tail.

The protein localises to the cytoplasm. It localises to the nucleus. Its function is as follows. Regulatory subunit of the histone acetylase B (HAT-B) complex. The complex acetylates 'Lys-12' of histone H4 which is required for telomeric silencing. This chain is Histone acetyltransferase type B subunit 2 (HAT2), found in Debaryomyces hansenii (strain ATCC 36239 / CBS 767 / BCRC 21394 / JCM 1990 / NBRC 0083 / IGC 2968) (Yeast).